Here is a 398-residue protein sequence, read N- to C-terminus: Enolase (398 aa).

Gln-154 provides a ligand contact to (2R)-2-phosphoglycerate. Residue Glu-196 is the Proton donor of the active site. Mg(2+)-binding residues include Asp-232, Glu-273, and Asp-300. Positions 325, 354, 355, and 376 each coordinate (2R)-2-phosphoglycerate. The active-site Proton acceptor is the Lys-325.

The protein belongs to the enolase family. Mg(2+) serves as cofactor.

The protein resides in the cytoplasm. The protein localises to the secreted. Its subcellular location is the cell surface. It carries out the reaction (2R)-2-phosphoglycerate = phosphoenolpyruvate + H2O. The protein operates within carbohydrate degradation; glycolysis; pyruvate from D-glyceraldehyde 3-phosphate: step 4/5. In terms of biological role, catalyzes the reversible conversion of 2-phosphoglycerate (2-PG) into phosphoenolpyruvate (PEP). It is essential for the degradation of carbohydrates via glycolysis. This Natronomonas pharaonis (strain ATCC 35678 / DSM 2160 / CIP 103997 / JCM 8858 / NBRC 14720 / NCIMB 2260 / Gabara) (Halobacterium pharaonis) protein is Enolase.